The sequence spans 486 residues: Probable transporter MCH1 (486 aa).

6 consecutive transmembrane segments (helical) span residues 31–51 (ISFF…LFSL), 69–89 (FIAS…GYLA), 91–111 (CYGP…SYFV), 132–152 (FGIC…SSLL), 164–184 (LAIS…SQLM), and 204–224 (FFGV…SVVS). The interval 236 to 260 (EMEEADEESPLMTSRSRHSHHSCED) is disordered. The chain crosses the membrane as a helical span at residues 280 to 300 (FINFLKDKSAWLLLASLILNI). N322 carries N-linked (GlcNAc...) asparagine glycosylation. Helical transmembrane passes span 327–348 (VSIM…SDYL) and 357–377 (ICRV…QFMV). A glycan (N-linked (GlcNAc...) asparagine) is linked at N390. 2 consecutive transmembrane segments (helical) span residues 395 to 415 (GGLF…DMMG) and 417 to 437 (TWGS…IFYG). An N-linked (GlcNAc...) asparagine glycan is attached at N457. Residues 458-478 (LTAVGLSVSLILIIIVWKGIW) traverse the membrane as a helical segment.

The protein belongs to the major facilitator superfamily.

The protein localises to the vacuole membrane. Functionally, probable transporter. This Debaryomyces hansenii (strain ATCC 36239 / CBS 767 / BCRC 21394 / JCM 1990 / NBRC 0083 / IGC 2968) (Yeast) protein is Probable transporter MCH1 (MCH1).